Consider the following 343-residue polypeptide: MGNTVTCCVSPDASPKAGRDRAVTERGEPYQAQVELQETDPGPHLQHISDREFPVDFHDEPNPSDHPQASTIFLSKSQTDVREKRKSNHINHVSPGQLTKKYSSCSTIFLDDSTVSQPNLRSTIKCVTLAIYYHIKNRDSDRSLEIFDEKLHPLTREEVADDYCKHDPDHKHIYRFVRTLFSAAQLTAECAIVTLVYLERLLTYAEIDICPSNWKRIVLGAILLASKVWDDQAVWNVDYCQILKDITVEDMNEMERHFLELLQFNINVPASVYAKYYFDLRSLADDNNLSFLLEPLSKERAQKLEAISRLCEDKYKDLSKAAMRRSISADNLVGIRRSNAIIS.

The interval 1–48 is disordered; that stretch reads MGNTVTCCVSPDASPKAGRDRAVTERGEPYQAQVELQETDPGPHLQHI. The span at 17–28 shows a compositional bias: basic and acidic residues; that stretch reads AGRDRAVTERGE. One can recognise a Cyclin N-terminal domain in the interval 145-267; the sequence is EIFDEKLHPL…FLELLQFNIN (123 aa).

This sequence belongs to the cyclin family. Cyclin Y subfamily.

It localises to the cell membrane. Functionally, key regulator of Wnt signaling implicated in various biological processes, such as embryonic neurogenesis. In Xenopus tropicalis (Western clawed frog), this protein is Cyclin-Y-like protein 1 (ccnyl1).